Consider the following 562-residue polypeptide: Apical membrane antigen 1 (562 aa).

Residues 1–21 (MNKIYCILFLSAQCLVHMGKC) form the signal peptide. Topologically, residues 22–484 (EPNQKPSRLT…QYAQGESKNQ (463 aa)) are extracellular. Asn-84 and Asn-176 each carry an N-linked (GlcNAc...) asparagine glycan. Intrachain disulfides connect Cys-94-Cys-247, Cys-162-Cys-192, Cys-208-Cys-220, Cys-265-Cys-363, Cys-282-Cys-354, Cys-388-Cys-444, Cys-432-Cys-449, and Cys-434-Cys-451. Residue Asn-226 is glycosylated (N-linked (GlcNAc...) asparagine). 2 N-linked (GlcNAc...) asparagine glycosylation sites follow: Asn-405 and Asn-441. Residues 485-507 (MLLIIIGITGGVCVVALASMFYF) form a helical membrane-spanning segment. Over 508–562 (RKKAHNDKYDKMEQADGYGKPTTRKDEMLDPEASFWGEEKRASHTTPVLMEKPYY) the chain is Cytoplasmic. The segment at 519–543 (MEQADGYGKPTTRKDEMLDPEASFW) is disordered.

It belongs to the apicomplexan parasites AMA1 family.

The protein resides in the membrane. Functionally, involved in parasite invasion of erythrocytes. The sequence is that of Apical membrane antigen 1 (AMA-1) from Plasmodium fragile.